The chain runs to 374 residues: Alcohol dehydrogenase 1 (374 aa).

Residue Ser-1 is modified to N-acetylserine. The Zn(2+) site is built by Cys-46, His-67, Cys-97, Cys-100, Cys-103, Cys-111, and Cys-174. NAD(+)-binding positions include Gly-199 to Gly-204, Asp-223, Lys-228, Val-292 to Val-294, and Arg-369.

It belongs to the zinc-containing alcohol dehydrogenase family. Class-I subfamily. The cofactor is Zn(2+).

The protein localises to the cytoplasm. The catalysed reaction is a primary alcohol + NAD(+) = an aldehyde + NADH + H(+). It carries out the reaction a secondary alcohol + NAD(+) = a ketone + NADH + H(+). This chain is Alcohol dehydrogenase 1, found in Alligator mississippiensis (American alligator).